We begin with the raw amino-acid sequence, 698 residues long: Interleukin enhancer-binding factor 3 (698 aa).

The 375-residue stretch at 5 to 379 (RIFLNDDRHV…ALKRPMEEDG (375 aa)) folds into the DZF domain. 3 disordered regions span residues 51-88 (QQEK…PTRT), 374-403 (PMEE…PPQA), and 473-522 (EEKE…KHGK). Over residues 61–71 (EQPEPEEPETT) the composition is skewed to acidic residues. 2 stretches are compositionally biased toward basic and acidic residues: residues 72–81 (EEGKDSEGKT) and 374–384 (PMEEDGEDKSP). The Bipartite nuclear localization signal motif lies at 372–390 (KRPMEEDGEDKSPSKKKKK). The region spanning 399-468 (EPPQAMNALM…AVKVLQDMGL (70 aa)) is the DRBM 1 domain. Positions 490-503 (TPAQPADSTQTDSA) are enriched in polar residues. The DRBM 2 domain occupies 520-586 (HGKNPVMELN…ALAALEKLFP (67 aa)).

In terms of assembly, a component of a ybx2/frgy2-containing mRNA-ribonucleoprotein (mRNP) complex. Also a component of the CCAAT box transcription factor (CBTF) complex. Post-translationally, phosphorylated. Phosphorylation affects nuclear translocation. Methylated by protein arginine N-methyltransferase 1 (prmt1b) in the RGG-rich domain. Methylation decreases DNA-binding and thereby decreases transcription of the gata2 gene, but does not regulate dsRNA binding or subcellular localization.

It is found in the nucleus. Its subcellular location is the cytoplasm. Its function is as follows. RNA-binding protein that plays an essential role in the biogenesis of circular RNAs (circRNAs) which are produced by back-splicing circularization of pre-mRNAs. Within the nucleus, promotes circRNAs processing by stabilizing the regulatory elements residing in the flanking introns of the circularized exons. Plays thereby a role in the back-splicing of a subset of circRNAs. As a consequence, participates in a wide range of transcriptional and post-transcriptional processes. Binds to poly-U elements and AU-rich elements (AREs) in the 3'-UTR of target mRNAs. Upon viral infection, ILF3 accumulates in the cytoplasm and participates in the innate antiviral response. Mechanistically, ILF3 becomes phosphorylated and activated by the double-stranded RNA-activated protein kinase/PKR which releases ILF3 from cellular mature circRNAs. In turn, unbound ILF3 molecules are able to interact with and thus inhibit viral mRNAs. Has a cytoplasmic role early in development as part of a ribonucleoprotein (mRNP) complex which may regulate mRNA transport and/or translation. Following nuclear localization at the mid-blastula transition, acts as a transcription factor and binds the 5'-CCAAT-3' promoter sequence to regulate transcription of the gata2 gene as a subunit of the CCAAT box transcription factor (CBTF). Its role as an mRNP component negatively regulates its activity as a transcription factor by precluding its nuclear localization. The chain is Interleukin enhancer-binding factor 3 from Xenopus tropicalis (Western clawed frog).